The sequence spans 348 residues: Nitrogenase vanadium-iron protein beta chain (348 aa).

Residues C31, C56, C115, and S153 each contribute to the [8Fe-7S] cluster site.

The protein belongs to the NifD/NifK/NifE/NifN family. In terms of assembly, hexamer of two alpha, two beta, and two delta chains. [8Fe-7S] cluster serves as cofactor.

It catalyses the reaction N2 + 8 reduced [2Fe-2S]-[ferredoxin] + 16 ATP + 16 H2O = H2 + 8 oxidized [2Fe-2S]-[ferredoxin] + 2 NH4(+) + 16 ADP + 16 phosphate + 6 H(+). Its function is as follows. This vanadium-iron protein is part of the nitrogenase complex that catalyzes the key enzymatic reactions in nitrogen fixation. The sequence is that of Nitrogenase vanadium-iron protein beta chain (vnfK) from Azotobacter salinestris.